The sequence spans 220 residues: Adenylate kinase (220 aa).

10–15 is an ATP binding site; that stretch reads GSGKST. Positions 30 to 59 are NMP; sequence SSGDIIRAEISSRTPLGLEMEKYLSRGDLI. AMP is bound by residues Ser-31, Arg-36, 57-59, 83-86, and Gln-90; these read DLI and GYPR. Positions 124 to 161 are LID; it reads GRRICSKCGAVYHIEFNPPKIPGKCDICGGDLIQRPDD. Position 125 (Arg-125) interacts with ATP. The Zn(2+) site is built by Cys-128 and Cys-131. Position 134–135 (134–135) interacts with ATP; it reads VY. Residues Cys-148 and Cys-151 each contribute to the Zn(2+) site. Residues Arg-158 and Arg-169 each coordinate AMP. Gly-197 serves as a coordination point for ATP.

Belongs to the adenylate kinase family. In terms of assembly, monomer.

The protein resides in the cytoplasm. It carries out the reaction AMP + ATP = 2 ADP. The protein operates within purine metabolism; AMP biosynthesis via salvage pathway; AMP from ADP: step 1/1. Catalyzes the reversible transfer of the terminal phosphate group between ATP and AMP. Plays an important role in cellular energy homeostasis and in adenine nucleotide metabolism. In Pyrococcus horikoshii (strain ATCC 700860 / DSM 12428 / JCM 9974 / NBRC 100139 / OT-3), this protein is Adenylate kinase.